The sequence spans 242 residues: MSKQPENSFSSDKFFPIKQKLALEAVALVEPGMCVGLGSGSTAREFILALGDRVRTERLVITAVASSRISQLLAEAVGIPLLDHSLLQDVDLVVDGADEVDPCLRMIKGGGGALFREKILLQSGKRNVILVDERKLVPTLGKFSLPIEIAPFGCSSVQRILNKQGYFGEWRETSAGERFITDNGNYIYDVRTPDSYANPEEDMIRLLQIRGIIDVGFVIAKAEVWVGYADGSIVRKKKHNEY.

Substrate is bound by residues 39–42 (SGST), 95–98 (DGAD), and 108–111 (KGGG). Glu-117 serves as the catalytic Proton acceptor. Residue Lys-135 participates in substrate binding.

The protein belongs to the ribose 5-phosphate isomerase family. In terms of assembly, homodimer.

It catalyses the reaction aldehydo-D-ribose 5-phosphate = D-ribulose 5-phosphate. Its pathway is carbohydrate degradation; pentose phosphate pathway; D-ribose 5-phosphate from D-ribulose 5-phosphate (non-oxidative stage): step 1/1. Functionally, catalyzes the reversible conversion of ribose-5-phosphate to ribulose 5-phosphate. This chain is Ribose-5-phosphate isomerase A, found in Chlamydia trachomatis serovar A (strain ATCC VR-571B / DSM 19440 / HAR-13).